A 267-amino-acid chain; its full sequence is Translation initiation factor 2 subunit alpha (267 aa).

The 72-residue stretch at 12–83 (GEYVIATVKE…RRKTVDVSLK (72 aa)) folds into the S1 motif domain.

Belongs to the eIF-2-alpha family. As to quaternary structure, heterotrimer composed of an alpha, a beta and a gamma chain.

In terms of biological role, eIF-2 functions in the early steps of protein synthesis by forming a ternary complex with GTP and initiator tRNA. The sequence is that of Translation initiation factor 2 subunit alpha from Staphylothermus marinus (strain ATCC 43588 / DSM 3639 / JCM 9404 / F1).